The chain runs to 118 residues: Fluoride-specific ion channel FluC 2 (118 aa).

The next 4 membrane-spanning stretches (helical) occupy residues 1-21 (MMEA…RFAI), 33-53 (FPIA…YIIG), 55-75 (GVTT…FTTF), and 93-113 (ILFL…FLGM). Gly70 and Thr73 together coordinate Na(+).

This sequence belongs to the fluoride channel Fluc/FEX (TC 1.A.43) family.

It localises to the cell membrane. It carries out the reaction fluoride(in) = fluoride(out). Na(+) is not transported, but it plays an essential structural role and its presence is essential for fluoride channel function. In terms of biological role, fluoride-specific ion channel. Important for reducing fluoride concentration in the cell, thus reducing its toxicity. This is Fluoride-specific ion channel FluC 2 from Bacillus cereus (strain ATCC 10987 / NRS 248).